A 260-amino-acid chain; its full sequence is Triosephosphate isomerase (260 aa).

Substrate is bound at residue 11–13; sequence NWK. Residue His103 is the Electrophile of the active site. Glu175 serves as the catalytic Proton acceptor. Substrate is bound by residues Gly181, Ser220, and 241–242; that span reads GG.

Belongs to the triosephosphate isomerase family. As to quaternary structure, homodimer.

It localises to the cytoplasm. The catalysed reaction is D-glyceraldehyde 3-phosphate = dihydroxyacetone phosphate. It functions in the pathway carbohydrate biosynthesis; gluconeogenesis. It participates in carbohydrate degradation; glycolysis; D-glyceraldehyde 3-phosphate from glycerone phosphate: step 1/1. In terms of biological role, involved in the gluconeogenesis. Catalyzes stereospecifically the conversion of dihydroxyacetone phosphate (DHAP) to D-glyceraldehyde-3-phosphate (G3P). The protein is Triosephosphate isomerase of Shewanella loihica (strain ATCC BAA-1088 / PV-4).